The sequence spans 128 residues: Small ribosomal subunit protein uS11m (128 aa).

It belongs to the universal ribosomal protein uS11 family.

The protein localises to the mitochondrion. The polypeptide is Small ribosomal subunit protein uS11m (RPS11) (Prototheca wickerhamii).